Consider the following 377-residue polypeptide: Flagellin D (377 aa).

Residues 104–128 are a coiled coil; that stretch reads NSKADRVAIQEEVTALNDELNRIAE.

Belongs to the bacterial flagellin family. In terms of assembly, heteromer of multiple flagellin subunits including FlaA, FlaB, FlaC, FlaD and possibly FlaE.

It is found in the secreted. Its subcellular location is the bacterial flagellum. Functionally, flagellin is the subunit protein which polymerizes to form the filaments of bacterial flagella. FlaD is not essential for flagellar synthesis and motility. May have a role in virulence unrelated to motility. The chain is Flagellin D (flaD) from Vibrio anguillarum (Listonella anguillarum).